The chain runs to 215 residues: Phosphoenolpyruvate guanylyltransferase (215 aa).

Positions 144, 159, and 162 each coordinate phosphoenolpyruvate.

It belongs to the CofC family.

The enzyme catalyses phosphoenolpyruvate + GTP + H(+) = enolpyruvoyl-2-diphospho-5'-guanosine + diphosphate. The protein operates within cofactor biosynthesis; coenzyme F420 biosynthesis. Guanylyltransferase that catalyzes the activation of phosphoenolpyruvate (PEP) as enolpyruvoyl-2-diphospho-5'-guanosine, via the condensation of PEP with GTP. It is involved in the biosynthesis of coenzyme F420, a hydride carrier cofactor. This Geodermatophilus obscurus (strain ATCC 25078 / DSM 43160 / JCM 3152 / CCUG 61914 / KCC A-0152 / KCTC 9177 / NBRC 13315 / NRRL B-3577 / G-20) protein is Phosphoenolpyruvate guanylyltransferase.